The sequence spans 314 residues: uncharacterized protein (314 aa).

The next 2 membrane-spanning stretches (helical) occupy residues 23 to 43 and 98 to 118; these read LALG…MALF and MASG…GPLT. The span at 165–184 shows a compositional bias: gly residues; the sequence is GLGSGAGGGDVGGGGAGGTT. Positions 165-314 are disordered; the sequence is GLGSGAGGGD…APDEKTDAGE (150 aa). The segment covering 190 to 202 has biased composition (pro residues); sequence GPPPVPTSSPPTT. Composition is skewed to low complexity over residues 203–212 and 219–232; these read PAGAPTKSAT and ASPA…AGMP. A helical transmembrane segment spans residues 221–241; sequence PASAHMGAAGMPMVPPGAMGA. Residues 294 to 314 are compositionally biased toward basic and acidic residues; sequence LLPEHKDFGRIAPDEKTDAGE.

It localises to the cell membrane. This is an uncharacterized protein from Mycobacterium tuberculosis (strain CDC 1551 / Oshkosh).